Here is a 33-residue protein sequence, read N- to C-terminus: Cytochrome b6-f complex subunit 8 (33 aa).

The chain crosses the membrane as a helical span at residues 2-22 (LFTLAWASLAAVFSFSIAMVV).

The protein belongs to the PetN family. As to quaternary structure, the 4 large subunits of the cytochrome b6-f complex are cytochrome b6, subunit IV (17 kDa polypeptide, PetD), cytochrome f and the Rieske protein, while the 4 small subunits are PetG, PetL, PetM and PetN. The complex functions as a dimer.

It is found in the cellular thylakoid membrane. In terms of biological role, component of the cytochrome b6-f complex, which mediates electron transfer between photosystem II (PSII) and photosystem I (PSI), cyclic electron flow around PSI, and state transitions. This Prochlorococcus marinus (strain MIT 9303) protein is Cytochrome b6-f complex subunit 8.